The following is a 299-amino-acid chain: tRNA dimethylallyltransferase (299 aa).

Residue 11–18 (GPTAVGKT) participates in ATP binding. 13–18 (TAVGKT) provides a ligand contact to substrate. The tract at residues 36–39 (DSQQ) is interaction with substrate tRNA.

It belongs to the IPP transferase family. In terms of assembly, monomer. Requires Mg(2+) as cofactor.

The enzyme catalyses adenosine(37) in tRNA + dimethylallyl diphosphate = N(6)-dimethylallyladenosine(37) in tRNA + diphosphate. Functionally, catalyzes the transfer of a dimethylallyl group onto the adenine at position 37 in tRNAs that read codons beginning with uridine, leading to the formation of N6-(dimethylallyl)adenosine (i(6)A). In Streptococcus pyogenes serotype M6 (strain ATCC BAA-946 / MGAS10394), this protein is tRNA dimethylallyltransferase.